Reading from the N-terminus, the 2322-residue chain is Genome polyprotein (2322 aa).

The Peptidase C28 domain maps to 29–182; that stretch reads MEFTLYNGEK…NPADVLVFVP (154 aa). Active-site for leader protease activity residues include cysteine 51, histidine 148, and aspartate 163. 2 disordered regions span residues 199–219 and 238–262; these read RLRG…SGNT and QLGD…HTNN. Glycine 202 carries N-myristoyl glycine; by host lipidation. 2 stretches are compositionally biased toward polar residues: residues 204–219 and 238–251; these read GQSS…SGNT and QLGD…SNEG. Residues 252 to 262 show a composition bias toward low complexity; the sequence is STDTTSTHTNN. The short motif at 869–871 is the Cell attachment site element; that stretch reads RGD. The region spanning 1189–1353 is the SF3 helicase domain; sequence NVHIANLCKV…DGYKINNKLD (165 aa). 1217 to 1224 contacts ATP; sequence GKSGQGKS. An intramembrane segment occupies 1484 to 1504; that stretch reads FEVVALCLTLLANIVIMLRQA. Residues 1512 to 1574 form a disordered region; sequence DDPLDGDVTL…PRAEGPYAGP (63 aa). A compositionally biased stretch (basic and acidic residues) spans 1539-1553; the sequence is FRERSPTEQGTREDA. Tyrosine 1571, tyrosine 1594, and tyrosine 1618 each carry O-(5'-phospho-RNA)-tyrosine. The region spanning 1642–1838 is the Peptidase C3 domain; sequence APPTDLQKMV…YCSCVSRSML (197 aa). Catalysis depends on histidine 1685, which acts as the For protease 3C activity; Proton donor/acceptor. Active-site for protease 3C activity residues include aspartate 1723 and cysteine 1802. The Nuclear localization signal motif lies at 1868–1876; that stretch reads MRKTKLAPT. The 119-residue stretch at 2086 to 2204 folds into the RdRp catalytic domain; it reads KNVWDVDYSA…ASDYDLDFEA (119 aa).

Belongs to the picornaviruses polyprotein family. As to quaternary structure, interacts with host ISG15. In terms of assembly, interacts (via R-G-D motif) with host ITGAV/ITGB6. Interacts with host MAVS; this interaction inhibits binding of host TRAF3 to MAVS, thereby suppressing interferon-mediated responses. Forms homooligomers. As to quaternary structure, homohexamer. Interacts with host VIM. Interacts with host BECN1. In terms of assembly, interacts with host DCTN3. Interacts with RNA-dependent RNA polymerase; this interaction allows 3B-1 to binds 2 polymerases and act as a primer. It also allows the recruitment of the RNA-dependent RNA polymerase to host membranes. As to quaternary structure, interacts with RNA-dependent RNA polymerase; this interaction allows 3B-2 to act as a primer. In terms of assembly, interacts with RNA-dependent RNA polymerase; this interaction allows 3B-3 to act as a primer. Interacts with 3B-1; this interaction allows 3B-1 to binds 2 polymerases and act as a primer. It also allows the recruitment of the RNA-dependent RNA polymerase to host membranes. Interacts with 3B-2; this interaction allows 3B-2 to act as a primer. Interacts with 3B-3; this interaction allows 3B-3 to act as a primer. Post-translationally, removes six residues from its own C-terminus, generating sLb(pro). Specific enzymatic cleavages in vivo by the viral proteases yield a variety of precursors and mature proteins. The polyprotein seems to be cotranslationally cleaved at the 2A/2B junction by a ribosomal skip from one codon to the next without formation of a peptide bond. This process would release the L-P1-2A peptide from the translational complex. In terms of processing, during virion maturation, immature virions are rendered infectious following cleavage of VP0 into VP4 and VP2. This maturation seems to be an autocatalytic event triggered by the presence of RNA in the capsid and is followed by a conformational change of the particle. Post-translationally, myristoylation is required during RNA encapsidation and formation of the mature virus particle. Uridylylated by the polymerase and covalently linked to the 5'-end of genomic RNA. These uridylylated forms act as a nucleotide-peptide primer for the polymerase.

Its subcellular location is the host nucleus. The protein resides in the host cytoplasm. It is found in the virion. It localises to the host endoplasmic reticulum membrane. The protein localises to the host cytoplasmic vesicle membrane. The enzyme catalyses Autocatalytically cleaves itself from the polyprotein of the foot-and-mouth disease virus by hydrolysis of a Lys-|-Gly bond, but then cleaves host cell initiation factor eIF-4G at bonds -Gly-|-Arg- and -Lys-|-Arg-.. It carries out the reaction a ribonucleoside 5'-triphosphate + H2O = a ribonucleoside 5'-diphosphate + phosphate + H(+). It catalyses the reaction RNA(n) + a ribonucleoside 5'-triphosphate = RNA(n+1) + diphosphate. The catalysed reaction is Selective cleavage of Gln-|-Gly bond in the poliovirus polyprotein. In other picornavirus reactions Glu may be substituted for Gln, and Ser or Thr for Gly.. In terms of biological role, autocatalytically cleaves itself from the polyprotein at the L/VP0 junction. Also cleaves the host translation initiation factors EIF4G1 and EIF4G3, in order to shut off the capped cellular mRNA transcription. Plays a role in counteracting host innate antiviral response using diverse mechanisms. Possesses a deubiquitinase activity acting on both 'Lys-48' and 'Lys-63'-linked polyubiquitin chains. In turn, inhibits the ubiquitination and subsequent activation of key signaling molecules of type I IFN response such as host RIGI, TBK1, TRAF3 and TRAF6. Inhibits host NF-kappa-B activity by inducing a decrease in RELA mRNA levels. Cleaves a peptide bond in the C-terminus of host ISG15, resulting in the damaging of this modifier that can no longer be attached to target proteins. Also cleaves host G3BP1 and G3BP2 in order to inhibit cytoplasmic stress granules assembly. Its function is as follows. Lies on the inner surface of the capsid shell. After binding to the host receptor, the capsid undergoes conformational changes. Capsid protein VP4 is released, capsid protein VP1 N-terminus is externalized, and together, they shape a pore in the host membrane through which the viral genome is translocated into the host cell cytoplasm. After genome has been released, the channel shrinks. Functionally, forms an icosahedral capsid of pseudo T=3 symmetry with capsid proteins VP1 and VP3. The capsid is composed of 60 copies of each capsid protein organized in the form of twelve pentamers and encloses the viral positive strand RNA genome. Upon acidifcation in the endosome, dissociates into pentamers. Forms an icosahedral capsid of pseudo T=3 symmetry with capsid proteins VP0 and VP3. The capsid is composed of 60 copies of each capsid protein organized in the form of twelve pentamers and encloses the viral positive strand RNA genome. Upon acidifcation in the endosome, dissociates into pentamers. In terms of biological role, forms an icosahedral capsid of pseudo T=3 symmetry with capsid proteins VP2 and VP3. The capsid is composed of 60 copies of each capsid protein organized in the form of twelve pentamers and encloses the viral positive strand RNA genome. Mediates cell entry by attachment to an integrin receptor, usually host ITGAV/ITGB6. In addition, targets host MAVS to suppress type I IFN pathway. Upon acidifcation in the endosome, dissociates into pentamers. Its function is as follows. Mediates self-processing of the polyprotein by a translational effect termed 'ribosome skipping'. Mechanistically, 2A-mediated cleavage occurs between the C-terminal glycine and the proline of the downstream protein 2B. In the case of foot-and-mouth disease virus, the 2A oligopeptide is post-translationally 'trimmed' from the C-terminus of the upstream protein 1D by 3C proteinase. Functionally, plays an essential role in the virus replication cycle by acting as a viroporin. Creates a pore in the host endoplasmic reticulum and as a consequence releases Ca2+ in the cytoplasm of infected cell. In turn, high levels of cytoplasmic calcium may trigger membrane trafficking and transport of viral ER-associated proteins to viroplasms, sites of viral genome replication. Associates with and induces structural rearrangements of intracellular membranes. Triggers host autophagy by interacting with host BECN1 and thereby promotes viral replication. Participates in viral replication and interacts with host DHX9. Displays RNA-binding, nucleotide binding and NTPase activities. May play a role in virion morphogenesis and viral RNA encapsidation by interacting with the capsid protein VP3. In terms of biological role, plays important roles in virus replication, virulence and host range. Cooperates with host DDX56 to inhibit IRF3 nuclear translocation and subsequent type I interferon production. Its function is as follows. Covalently linked to the 5'-end of both the positive-strand and negative-strand genomic RNAs. Acts as a genome-linked replication primer. Functionally, cysteine protease that generates mature viral proteins from the precursor polyprotein. In addition to its proteolytic activity, binds to viral RNA and thus influences viral genome replication. RNA and substrate bind cooperatively to the protease. RNA-directed RNA polymerase 3D-POL replicates genomic and antigenomic RNA by recognizing replications specific signals. Covalently attaches UMP to a tyrosine of VPg, which is used to prime RNA synthesis. The positive stranded RNA genome is first replicated at virus induced membranous vesicles, creating a dsRNA genomic replication form. This dsRNA is then used as template to synthesize positive stranded RNA genomes. ss(+)RNA genomes are either translated, replicated or encapsidated. The sequence is that of Genome polyprotein from Foot-and-mouth disease virus (isolate Swine/Taiwan/OTai/1997 serotype O) (FMDV).